The primary structure comprises 222 residues: MKAAVLVFPGSNCDRDLAVGFRSAGFEVEMVWHKETALPAGIDVVGIPGGFSYGDYLRCGAIAAQSPIMRAVADFAGQGGHVLGVCNGFQVLCETRLLPGVLMRNGGIKFVCRAEPLVVASATSPFTDGYSIGDRIAVPVAHHDGNYQIDDEGLSALRSEDRIAFTYADNPNGSRADIAGVLSANRRVLGMMPHPERAVDVAHGGTDGSVLFASLAAALVAA.

One can recognise a Glutamine amidotransferase type-1 domain in the interval 3-222 (AAVLVFPGSN…ASLAAALVAA (220 aa)). Cysteine 86 acts as the Nucleophile in catalysis. Catalysis depends on residues histidine 194 and glutamate 196.

In terms of assembly, part of the FGAM synthase complex composed of 1 PurL, 1 PurQ and 2 PurS subunits.

It localises to the cytoplasm. The enzyme catalyses N(2)-formyl-N(1)-(5-phospho-beta-D-ribosyl)glycinamide + L-glutamine + ATP + H2O = 2-formamido-N(1)-(5-O-phospho-beta-D-ribosyl)acetamidine + L-glutamate + ADP + phosphate + H(+). The catalysed reaction is L-glutamine + H2O = L-glutamate + NH4(+). The protein operates within purine metabolism; IMP biosynthesis via de novo pathway; 5-amino-1-(5-phospho-D-ribosyl)imidazole from N(2)-formyl-N(1)-(5-phospho-D-ribosyl)glycinamide: step 1/2. Functionally, part of the phosphoribosylformylglycinamidine synthase complex involved in the purines biosynthetic pathway. Catalyzes the ATP-dependent conversion of formylglycinamide ribonucleotide (FGAR) and glutamine to yield formylglycinamidine ribonucleotide (FGAM) and glutamate. The FGAM synthase complex is composed of three subunits. PurQ produces an ammonia molecule by converting glutamine to glutamate. PurL transfers the ammonia molecule to FGAR to form FGAM in an ATP-dependent manner. PurS interacts with PurQ and PurL and is thought to assist in the transfer of the ammonia molecule from PurQ to PurL. The chain is Phosphoribosylformylglycinamidine synthase subunit PurQ from Jannaschia sp. (strain CCS1).